A 669-amino-acid polypeptide reads, in one-letter code: Threonine--tRNA ligase (669 aa).

A TGS domain is found at Asp3 to Thr60. Positions Asp260–Pro566 are catalytic. Zn(2+)-binding residues include Cys365, His416, and His543.

It belongs to the class-II aminoacyl-tRNA synthetase family. In terms of assembly, homodimer. Requires Zn(2+) as cofactor.

Its subcellular location is the cytoplasm. It carries out the reaction tRNA(Thr) + L-threonine + ATP = L-threonyl-tRNA(Thr) + AMP + diphosphate + H(+). Catalyzes the attachment of threonine to tRNA(Thr) in a two-step reaction: L-threonine is first activated by ATP to form Thr-AMP and then transferred to the acceptor end of tRNA(Thr). Also edits incorrectly charged L-seryl-tRNA(Thr). This Paenarthrobacter aurescens (strain TC1) protein is Threonine--tRNA ligase.